Here is a 488-residue protein sequence, read N- to C-terminus: MSLWFCPLTSTLNRQQPIHFIGVGGIGMSALALILVNRGHIVSGSDSRENTAVEQLRAQGVRVFRDQSAANIDAICSNVDLLPLVVISTAIPKSNPELKAAKLSQLKILHRSDLLAALIQAQPSIAVAGSHGKTTTSTLLTTLLATTDQDPTAVIGGVVPYYDSNGHVGKGRLLVAEADESDGSLVKFQATLGVITNLELDHTDHYANLDELINTMKRFGQGCRRLLANFDCPILKEHFDATAWWSVKTSAGVDFAALPICLNGDQTIADIYEQGKRMGQITLPMPGLHNLSNAMAAIAACRLEGLSFEDVQQGLADLQPPGRRFDFRGTWEGRQIVDDYAHHPSEVSATLTMARLIVTSGRSQLPNPPKRILAVFQPHRYSRTNKFLYDFARALGEADAVLLAPVYSAGENPIQGATSESLAKAIRIQHPNLPVAVAENFNQLTLLVQKHSLKGDLVLAMGAGNINNLWRQLTHLDNAKRCPPSLAA.

129 to 135 (GSHGKTT) is a binding site for ATP.

The protein belongs to the MurCDEF family.

Its subcellular location is the cytoplasm. The enzyme catalyses UDP-N-acetyl-alpha-D-muramate + L-alanine + ATP = UDP-N-acetyl-alpha-D-muramoyl-L-alanine + ADP + phosphate + H(+). Its pathway is cell wall biogenesis; peptidoglycan biosynthesis. Cell wall formation. In Prochlorococcus marinus (strain MIT 9313), this protein is UDP-N-acetylmuramate--L-alanine ligase.